The primary structure comprises 185 residues: Putative tyrosine-protein phosphatase OCA1 (185 aa).

Residues 18 to 178 (NFCPVEKQLY…TVEIGSGKGS (161 aa)) enclose the Tyrosine-protein phosphatase domain. Cysteine 116 functions as the Phosphocysteine intermediate in the catalytic mechanism.

The protein belongs to the protein-tyrosine phosphatase family.

Its subcellular location is the cytoplasm. It carries out the reaction O-phospho-L-tyrosyl-[protein] + H2O = L-tyrosyl-[protein] + phosphate. In terms of biological role, putative tyrosine-protein phosphatase required for protection against superoxide stress. The polypeptide is Putative tyrosine-protein phosphatase OCA1 (OCA1) (Meyerozyma guilliermondii (strain ATCC 6260 / CBS 566 / DSM 6381 / JCM 1539 / NBRC 10279 / NRRL Y-324) (Yeast)).